Consider the following 290-residue polypeptide: Undecaprenyl-diphosphatase (290 aa).

A run of 8 helical transmembrane segments spans residues 1-21 (MFLL…LTEF), 48-68 (SAFT…AWVF), 101-121 (IHVL…DDLI), 125-145 (LFSV…MIIA), 161-181 (INYF…WPGF), 202-222 (SDFT…LSLL), 231-251 (AHIP…LIAI), and 266-286 (FAIY…GFGI).

It belongs to the UppP family.

It localises to the cell membrane. It carries out the reaction di-trans,octa-cis-undecaprenyl diphosphate + H2O = di-trans,octa-cis-undecaprenyl phosphate + phosphate + H(+). Its function is as follows. Catalyzes the dephosphorylation of undecaprenyl diphosphate (UPP). Confers resistance to bacitracin. The protein is Undecaprenyl-diphosphatase of Staphylococcus epidermidis (strain ATCC 35984 / DSM 28319 / BCRC 17069 / CCUG 31568 / BM 3577 / RP62A).